A 100-amino-acid polypeptide reads, in one-letter code: uncharacterized protein (100 aa).

This is an uncharacterized protein from Caenorhabditis elegans.